We begin with the raw amino-acid sequence, 833 residues long: Transmembrane protease serine 7 (833 aa).

Over 1 to 62 the chain is Cytoplasmic; that stretch reads MDKEKSDPSC…RAPFWNVQNK (62 aa). The segment at 30 to 49 is disordered; the sequence is KLPGRRLPRKPIGKARPRKQ. The segment covering 32–49 has biased composition (basic residues); sequence PGRRLPRKPIGKARPRKQ. The helical; Signal-anchor for type II membrane protein transmembrane segment at 63-83 threads the bilayer; the sequence is IILFTVFLFILAVTAWTLLWL. Residues 84-829 are Extracellular-facing; sequence YISKTDSKDA…NFVPWIHKYV (746 aa). The SEA domain maps to 92–220; that stretch reads DAFYFVGMFR…DSVVLNAGLR (129 aa). N196 carries N-linked (GlcNAc...) asparagine glycosylation. 3 disulfides stabilise this stretch: C233-C259, C285-C312, and C355-C386. 2 consecutive CUB domains span residues 233 to 350 and 355 to 471; these read CSQY…FEVI and CENT…YNIS. 2 N-linked (GlcNAc...) asparagine glycosylation sites follow: N405 and N469. 2 LDL-receptor class A domains span residues 473–509 and 548–585; these read PCPA…LFCV and PCTN…EGCG. 7 disulfide bridges follow: C474–C486, C481–C499, C493–C508, C549–C561, C556–C575, C569–C584, and C621–C637. The 235-residue stretch at 596–830 folds into the Peptidase S1 domain; it reads VVGGSDSQEG…FVPWIHKYVP (235 aa). Residues H636 and D684 each act as charge relay system in the active site. Cystine bridges form between C720/C786, C752/C765, and C776/C806. The active-site Charge relay system is S780.

This sequence belongs to the peptidase S1 family. In terms of assembly, forms a heterodimer with SERPINA5. In terms of processing, N-glycosylated.

It is found in the cell membrane. In terms of biological role, serine protease which preferentially hydrolyzes peptides with Arg at the P1 position. In Rattus norvegicus (Rat), this protein is Transmembrane protease serine 7.